A 432-amino-acid chain; its full sequence is Pachytene checkpoint protein 2 homolog (432 aa).

Met-1 carries the post-translational modification N-acetylmethionine. An ATP-binding site is contributed by 179–186 (GPPGTGKT).

It belongs to the AAA ATPase family. PCH2 subfamily. As to quaternary structure, specifically interacts with the ligand binding domain of the thyroid receptor (TR). This interaction does not require the presence of thyroid hormone for its interaction. Interacts with proteasome subunit PSMA8; to participate in meiosis progression during spermatogenesis.

In terms of biological role, plays a key role in chromosome recombination and chromosome structure development during meiosis. Required at early steps in meiotic recombination that leads to non-crossovers pathways. Also needed for efficient completion of homologous synapsis by influencing crossover distribution along the chromosomes affecting both crossovers and non-crossovers pathways. Also required for development of higher-order chromosome structures and is needed for synaptonemal-complex formation. In males, required for efficient synapsis of the sex chromosomes and for sex body formation. Promotes early steps of the DNA double-strand breaks (DSBs) repair process upstream of the assembly of RAD51 complexes. Required for depletion of HORMAD1 and HORMAD2 from synapsed chromosomes. The protein is Pachytene checkpoint protein 2 homolog (TRIP13) of Canis lupus familiaris (Dog).